The chain runs to 542 residues: Cytochrome P450 734A6 (542 aa).

A helical transmembrane segment spans residues 2–22 (GWWGWAAAAAAAAAWVAVKVL). C474 is a heme binding site.

Belongs to the cytochrome P450 family. Requires heme as cofactor. Highly expressed in leaf sheaths. Expressed in roots, shoot apex, leaf blades, internodes and panicles.

The protein localises to the membrane. Functionally, cytochrome P450 involved in brassinosteroids (BRs) inactivation and regulation of BRs homeostasis. Is a multifunctional and multisubstrate enzyme that controls the endogenous bioactive BR content both by direct inactivation of castasterone (CS) and by decreasing the levels of BR precursors. Catalyzes the oxidation of carbon 22 hydroxylated BR intermediates to produce C26 oxidized metabolites. The polypeptide is Cytochrome P450 734A6 (CYP734A6) (Oryza sativa subsp. japonica (Rice)).